Reading from the N-terminus, the 443-residue chain is FLYWCH-type zinc finger-containing protein peb-1 (443 aa).

Positions 22-49 are disordered; that stretch reads KPGSSDISSSSTDTSAISPISVSSMPLS. Positions 25–42 are enriched in low complexity; it reads SSDISSSSTDTSAISPIS. The segment at residues 46–203 is a DNA-binding region (required for DNA-binding); that stretch reads MPLSPDKEKK…RNKDGKPKKP (158 aa). An FLYWCH-type zinc finger spans residues 69 to 135; sequence IVTSFKGYQK…NACTKGSHNH (67 aa). Positions 251–271 are disordered; the sequence is PTIQIPQPIPTPIQHQQQEQS.

It is found in the nucleus. Functionally, putative transcription factor. Binds to specific sequence motif 5'-[TC][AGT]TGCC[GA][AT]-3' in regulatory elements of target genes such as myosin myo-2. May modulate gene expression, perhaps acting in opposition to transcription factor pha-4. Involved in morphogenesis, perhaps especially in formation of the pharynx. Plays roles in molting, feeding and morphology. The chain is FLYWCH-type zinc finger-containing protein peb-1 from Caenorhabditis elegans.